The primary structure comprises 53 residues: Large ribosomal subunit protein uL30 (53 aa).

The protein belongs to the universal ribosomal protein uL30 family. In terms of assembly, part of the 50S ribosomal subunit.

In Deinococcus geothermalis (strain DSM 11300 / CIP 105573 / AG-3a), this protein is Large ribosomal subunit protein uL30.